A 364-amino-acid polypeptide reads, in one-letter code: Replication-associated protein (364 aa).

The CRESS-DNA virus Rep endonuclease domain occupies 17–120 (KHRNVNTFLT…PVTYWERGTF (104 aa)). Positions 24–27 (FLTY) match the RCR-1 motif. A divalent metal cation contacts are provided by E58, H66, and H68. Residues 66–68 (HIH) carry the RCR-2 motif. The active-site For DNA cleavage activity is Y106. Positions 106–109 (YAMK) match the RCR-3 motif. An a divalent metal cation-binding site is contributed by N110. Positions 180 to 192 (SANKLFPDIQEIY) are oligomerization. 234 to 241 (GPTRTGKS) is a binding site for ATP. The transactivation stretch occupies residues 257–275 (VDWSSYDEDAEYNIIDDIP). The short motif at 297 to 308 (KYGKRKKVASKS) is the Nuclear localization signal element.

Belongs to the geminiviridae Rep protein family. Homooligomer. Rep binds to repeated DNA motifs (iterons). Forms the O-complex, which is a Rep-DNA complex involved in the initiation of RCR. Part of the C- and V-complexes which are RepA-Rep-DNA complexes involved in the c-sense and v-sense transcription. Mg(2+) serves as cofactor. It depends on Mn(2+) as a cofactor.

The protein localises to the host nucleus. Functionally, essential for the replication of viral ssDNA. The closed circular ssDNA genome is first converted to a superhelical dsDNA. Rep binds a specific region at the genome origin of replication. It introduces an endonucleolytic nick within the conserved sequence 5'-TAATATTAC-3' in the intergenic region of the genome present in all geminiviruses, thereby initiating the rolling circle replication (RCR). Following cleavage, binds covalently to the 5'-phosphate of DNA as a tyrosyl ester. The cleavage gives rise to a free 3'-OH that serves as a primer for the cellular DNA polymerase. The polymerase synthesizes the (+) strand DNA by rolling circle mechanism. After one round of replication, a Rep-catalyzed nucleotidyl transfer reaction releases a circular single-stranded virus genome, thereby terminating the replication. Displays origin-specific DNA cleavage, nucleotidyl transferase, ATPase and helicase activities. Acts as an inhibitor of C-sense gene transcription. This chain is Replication-associated protein, found in Sugarcane streak virus (isolate South Africa) (SSV).